The primary structure comprises 807 residues: Ribosomal RNA large subunit methyltransferase K/L (807 aa).

The THUMP domain maps to 67–182 (QIYKICLWSR…EKQAEIFLDL (116 aa)). Residues 548 to 560 (NTQYGNPEASAQS) show a composition bias toward polar residues. The tract at residues 548–602 (NTQYGNPEASAQSKESKNAPEPKKDNRNRYKGNKFQQAREEAKRQEAQRLAQKKR) is disordered. Basic and acidic residues-rich tracts occupy residues 561 to 575 (KESK…DNRN) and 584 to 594 (QAREEAKRQEA).

It belongs to the methyltransferase superfamily. RlmKL family.

The protein resides in the cytoplasm. The catalysed reaction is guanosine(2445) in 23S rRNA + S-adenosyl-L-methionine = N(2)-methylguanosine(2445) in 23S rRNA + S-adenosyl-L-homocysteine + H(+). It carries out the reaction guanosine(2069) in 23S rRNA + S-adenosyl-L-methionine = N(2)-methylguanosine(2069) in 23S rRNA + S-adenosyl-L-homocysteine + H(+). Functionally, specifically methylates the guanine in position 2445 (m2G2445) and the guanine in position 2069 (m7G2069) of 23S rRNA. In Psychrobacter sp. (strain PRwf-1), this protein is Ribosomal RNA large subunit methyltransferase K/L.